The following is a 336-amino-acid chain: Cytosolic Fe-S cluster assembly factor NBP35 (336 aa).

Residues 1–20 (MIATQRPFPIPSPVPLAPSS) form a disordered region. Residues Cys35, Cys49, Cys52, and Cys58 each contribute to the [4Fe-4S] cluster site. 88 to 95 (GKGGVGKS) is a binding site for ATP. Positions 261 and 264 each coordinate [4Fe-4S] cluster.

The protein belongs to the Mrp/NBP35 ATP-binding proteins family. NUBP1/NBP35 subfamily. Heterotetramer of 2 NBP35 and 2 CFD1 chains. [4Fe-4S] cluster is required as a cofactor.

Its subcellular location is the cytoplasm. Its function is as follows. Component of the cytosolic iron-sulfur (Fe/S) protein assembly (CIA) machinery. Required for maturation of extramitochondrial Fe-S proteins. The NBP35-CFD1 heterotetramer forms a Fe-S scaffold complex, mediating the de novo assembly of an Fe-S cluster and its transfer to target apoproteins. The protein is Cytosolic Fe-S cluster assembly factor NBP35 of Cryptococcus neoformans var. neoformans serotype D (strain B-3501A) (Filobasidiella neoformans).